The chain runs to 115 residues: DNA repair protein homolog YozK (115 aa).

A UmuC domain is found at 12–115; the sequence is ILCVDMKSFY…EKCVHTYSID (104 aa). Residues Asp-16 and Asp-115 each coordinate Mg(2+).

The protein belongs to the DNA polymerase type-Y family. Requires Mg(2+) as cofactor.

This chain is DNA repair protein homolog YozK (yozK), found in Bacillus subtilis (strain 168).